A 601-amino-acid polypeptide reads, in one-letter code: Proteasome-associated ATPase (601 aa).

The segment covering 1–15 (MSGPRSGSGSGGSTG) has biased composition (gly residues). Residues 1–31 (MSGPRSGSGSGGSTGRPGDAESRRSAYEKEA) form a disordered region. Residues 18 to 31 (GDAESRRSAYEKEA) are compositionally biased toward basic and acidic residues. The stretch at 18 to 106 (GDAESRRSAY…LKEEVDRLAQ (89 aa)) forms a coiled coil. Position 289-294 (289-294 (GCGKTL)) interacts with ATP. The segment at 600–601 (YL) is docks into pockets in the proteasome alpha-ring.

It belongs to the AAA ATPase family. Homohexamer. Assembles into a hexameric ring structure that caps the 20S proteasome core. Strongly interacts with the prokaryotic ubiquitin-like protein Pup through a hydrophobic interface; the interacting region of ARC lies in its N-terminal coiled-coil domain. There is one Pup binding site per ARC hexamer ring. Upon ATP-binding, the C-terminus of ARC interacts with the alpha-rings of the proteasome core, possibly by binding to the intersubunit pockets.

Its pathway is protein degradation; proteasomal Pup-dependent pathway. Functionally, ATPase which is responsible for recognizing, binding, unfolding and translocation of pupylated proteins into the bacterial 20S proteasome core particle. May be essential for opening the gate of the 20S proteasome via an interaction with its C-terminus, thereby allowing substrate entry and access to the site of proteolysis. Thus, the C-termini of the proteasomal ATPase may function like a 'key in a lock' to induce gate opening and therefore regulate proteolysis. The sequence is that of Proteasome-associated ATPase from Frankia alni (strain DSM 45986 / CECT 9034 / ACN14a).